The chain runs to 400 residues: Formate-dependent phosphoribosylglycinamide formyltransferase (400 aa).

N(1)-(5-phospho-beta-D-ribosyl)glycinamide contacts are provided by residues 22–23 (EL) and E82. ATP-binding positions include R115, K157, 162 to 167 (SSGKGQ), 197 to 200 (EGFI), and E205. The region spanning 120–315 (RLAAETLGVP…EFELHARAIL (196 aa)) is the ATP-grasp domain. Mg(2+) contacts are provided by E274 and E286. N(1)-(5-phospho-beta-D-ribosyl)glycinamide-binding positions include D293, K362, and 369–370 (RR).

Belongs to the PurK/PurT family. Homodimer.

It catalyses the reaction N(1)-(5-phospho-beta-D-ribosyl)glycinamide + formate + ATP = N(2)-formyl-N(1)-(5-phospho-beta-D-ribosyl)glycinamide + ADP + phosphate + H(+). It functions in the pathway purine metabolism; IMP biosynthesis via de novo pathway; N(2)-formyl-N(1)-(5-phospho-D-ribosyl)glycinamide from N(1)-(5-phospho-D-ribosyl)glycinamide (formate route): step 1/1. Involved in the de novo purine biosynthesis. Catalyzes the transfer of formate to 5-phospho-ribosyl-glycinamide (GAR), producing 5-phospho-ribosyl-N-formylglycinamide (FGAR). Formate is provided by PurU via hydrolysis of 10-formyl-tetrahydrofolate. The protein is Formate-dependent phosphoribosylglycinamide formyltransferase of Variovorax paradoxus (strain S110).